We begin with the raw amino-acid sequence, 251 residues long: Octanoyltransferase (251 aa).

The BPL/LPL catalytic domain maps to 56–237; the sequence is ADTGDEIWVV…RLIANLDGES (182 aa). Substrate-binding positions include 96–103, 168–170, and 181–183; these read RGGQITYH, ALG, and GLS. Residue Cys-199 is the Acyl-thioester intermediate of the active site.

Belongs to the LipB family.

It localises to the cytoplasm. The catalysed reaction is octanoyl-[ACP] + L-lysyl-[protein] = N(6)-octanoyl-L-lysyl-[protein] + holo-[ACP] + H(+). It participates in protein modification; protein lipoylation via endogenous pathway; protein N(6)-(lipoyl)lysine from octanoyl-[acyl-carrier-protein]: step 1/2. Catalyzes the transfer of endogenously produced octanoic acid from octanoyl-acyl-carrier-protein onto the lipoyl domains of lipoate-dependent enzymes. Lipoyl-ACP can also act as a substrate although octanoyl-ACP is likely to be the physiological substrate. This Burkholderia ambifaria (strain ATCC BAA-244 / DSM 16087 / CCUG 44356 / LMG 19182 / AMMD) (Burkholderia cepacia (strain AMMD)) protein is Octanoyltransferase.